Reading from the N-terminus, the 859-residue chain is Paladin (859 aa).

The segment at 1 to 34 (MGTTASTAQQTVSAGTSLEGLQGGSSSSMDSQHS) is disordered. G2 carries the N-myristoyl glycine lipid modification. S89 is subject to Phosphoserine.

The protein belongs to the paladin family. Vascular expression detected in the central nervous system, kidney, lung, heart, skeletal muscle, white adipose tissue (WAT), brown adipose tissue, liver, pancreas and spleen. Not expressed in all vessels: for instance, not expressed in capillaries in the brain, and expressed mainly in large vessels in the heart, WAT, liver, pancreas and kidney. Predominant nonvascular expression in myocardium and lung mesenchyme. In large vessels, primarily expressed by smooth muscle cells, but occasionally detected at low levels in the endothelium. Expressed in various cells of the hematopoietic lineage.

The protein localises to the cytoplasm. The protein resides in the cytosol. This Mus musculus (Mouse) protein is Paladin (Pald1).